The following is a 98-amino-acid chain: Small proline-rich protein 2B (98 aa).

5 tandem repeats follow at residues proline 21–proline 29, proline 30–proline 38, proline 39–proline 47, proline 48–proline 56, and proline 57–proline 65. The segment at proline 21–proline 65 is 5 X 9 AA approximate tandem repeats.

Belongs to the cornifin (SPRR) family. In terms of tissue distribution, expressed in uterus.

It localises to the cytoplasm. Cross-linked envelope protein of keratinocytes. It is a keratinocyte protein that first appears in the cell cytosol, but ultimately becomes cross-linked to membrane proteins by transglutaminase. All that results in the formation of an insoluble envelope beneath the plasma membrane. This is Small proline-rich protein 2B (Sprr2b) from Mus musculus (Mouse).